The sequence spans 373 residues: Putative glutamate--cysteine ligase 2-1 (373 aa).

Belongs to the glutamate--cysteine ligase type 2 family. YbdK subfamily.

The enzyme catalyses L-cysteine + L-glutamate + ATP = gamma-L-glutamyl-L-cysteine + ADP + phosphate + H(+). Its function is as follows. ATP-dependent carboxylate-amine ligase which exhibits weak glutamate--cysteine ligase activity. In Legionella pneumophila (strain Paris), this protein is Putative glutamate--cysteine ligase 2-1.